The primary structure comprises 243 residues: UPF0758 protein SYNPCC7002_A0220 (243 aa).

The MPN domain maps to 112 to 235; the sequence is IIVDSPEAAA…FGSLRQKTAL (124 aa). 3 residues coordinate Zn(2+): H184, H186, and D197. Positions 184-197 match the JAMM motif motif; it reads HNHPSGNVDPSPED.

Belongs to the UPF0758 family.

The sequence is that of UPF0758 protein SYNPCC7002_A0220 from Picosynechococcus sp. (strain ATCC 27264 / PCC 7002 / PR-6) (Agmenellum quadruplicatum).